The following is a 327-amino-acid chain: GMP reductase (327 aa).

Cys176 (thioimidate intermediate) is an active-site residue. Residue 205–228 participates in NADP(+) binding; that stretch reads IIADGGIRTHGDIAKSIRFGASMV.

The protein belongs to the IMPDH/GMPR family. GuaC type 2 subfamily.

It carries out the reaction IMP + NH4(+) + NADP(+) = GMP + NADPH + 2 H(+). Functionally, catalyzes the irreversible NADPH-dependent deamination of GMP to IMP. It functions in the conversion of nucleobase, nucleoside and nucleotide derivatives of G to A nucleotides, and in maintaining the intracellular balance of A and G nucleotides. The chain is GMP reductase from Streptococcus pyogenes serotype M1.